The chain runs to 201 residues: Ras-related protein Rab-1B (201 aa).

Residue M1 is modified to N-acetylmethionine. GTP is bound by residues S17, G18, V19, G20, K21, S22, C23, Y33, T34, E35, S36, S39, and T40. Residue S22 coordinates Mg(2+). Residues 30–45 (DDTYTESYISTIGVDF) carry the Switch 1 motif. Positions 40 and 63 each coordinate Mg(2+). The interval 64–83 (TAGQERFRTITSSYYRGAHG) is switch 2 region; required for interaction with REP1/CHM. A Switch 2 motif is present at residues 65-80 (AGQERFRTITSSYYRG). G66 serves as a coordination point for GTP. Position 76 is a (Microbial infection) O-(2-cholinephosphoryl)serine (S76). Y77 bears the (Microbial infection) O-AMP-tyrosine mark. GTP is bound by residues N121, K122, D124, S151, A152, and K153. The segment at 174–201 (GPGAASGGERPNLKIDSTPVKPAGGGCC) is disordered. Residues C200 and C201 are each lipidated (S-geranylgeranyl cysteine). C201 bears the Cysteine methyl ester mark.

The protein belongs to the small GTPase superfamily. Rab family. In terms of assembly, interacts with MICAL1 and MICAL2. Interacts (in GTP-bound form) with MICALCL, MICAL1 and MILCAL3. Interacts with GDI1; the interaction requires the GDP-bound state. Interacts with CHM/REP1; the interaction requires the GDP-bound form and is necessary for prenylation by GGTase II. Interacts with RabGAP TBC1D20. Interacts (in GDP-bound form) with lipid phosphatase MTMR6 (via GRAM domain); the interaction regulates MTMR6 recruitment to the endoplasmic reticulum-Golgi intermediate compartment. Interacts (in GDP-bound form) with lipid phosphatase MTMR7. As to quaternary structure, (Microbial infection) Interacts with L.pneumophila AnkX. Interacts with L.pneumophila Lem3. Interacts with L.pneumophila SidD. Interacts with L.pneumophila DrrA. Mg(2+) serves as cofactor. In terms of processing, prenylated; by GGTase II, only after interaction of the substrate with Rab escort protein 1 (REP1). (Microbial infection) AMPylation at Tyr-77 by L.pneumophila DrrA occurs in the switch 2 region and leads to moderate inactivation of the GTPase activity. It appears to prolong the lifetime of the GTP state of RAB1B by restricting access of GTPase effectors to switch 2 and blocking effector-stimulated GTP hydrolysis, thereby rendering RAB1B constitutively active. It is later de-AMPylated by L.pneumophila SidD, releasing RAB1B from bacterial phagosomes. Post-translationally, (Microbial infection) Phosphocholinated at Ser-76 by L.pneumophila AnkX, leading to displace GDP dissociation inhibitors (GDI). Both GDP-bound and GTP-bound forms can be phosphocholinated. Dephosphocholinated by L.pneumophila Lem3, restoring accessibility to L.pneumophila GTPase effector LepB. In terms of processing, (Microbial infection) Glycosylated by S.typhimurium protein Ssek3: arginine GlcNAcylation prevents GTPase activity, thereby disrupting vesicular protein transport from the endoplasmic reticulum (ER) to the Golgi compartment.

It is found in the cytoplasm. It localises to the membrane. Its subcellular location is the preautophagosomal structure membrane. The protein resides in the perinuclear region. It catalyses the reaction GTP + H2O = GDP + phosphate + H(+). Regulated by guanine nucleotide exchange factors (GEFs) which promote the exchange of bound GDP for free GTP. Regulated by GTPase activating proteins (GAPs) including TBC1D20 which increases the GTP hydrolysis activity. Inhibited by GDP dissociation inhibitors (GDIs). Its function is as follows. The small GTPases Rab are key regulators of intracellular membrane trafficking, from the formation of transport vesicles to their fusion with membranes. Rabs cycle between an inactive GDP-bound form and an active GTP-bound form that is able to recruit to membranes different set of downstream effectors directly responsible for vesicle formation, movement, tethering and fusion. Plays a role in the initial events of the autophagic vacuole development which take place at specialized regions of the endoplasmic reticulum. Regulates vesicular transport between the endoplasmic reticulum and successive Golgi compartments. Required to modulate the compacted morphology of the Golgi. Promotes the recruitment of lipid phosphatase MTMR6 to the endoplasmic reticulum-Golgi intermediate compartment. The protein is Ras-related protein Rab-1B of Homo sapiens (Human).